We begin with the raw amino-acid sequence, 147 residues long: uncharacterized protein (147 aa).

Helical transmembrane passes span 4–26 (YLRV…FFWG) and 123–145 (YALC…RAYF).

Its subcellular location is the cell membrane. This is an uncharacterized protein from Treponema pallidum (strain Nichols).